Reading from the N-terminus, the 417-residue chain is Serine--tRNA ligase (417 aa).

L-serine is bound at residue 224–226; sequence TSE. ATP contacts are provided by residues 255 to 257 and V271; that span reads RRE. E278 provides a ligand contact to L-serine. 342-345 serves as a coordination point for ATP; that stretch reads ELTS. T377 contacts L-serine.

Belongs to the class-II aminoacyl-tRNA synthetase family. Type-1 seryl-tRNA synthetase subfamily. As to quaternary structure, homodimer. The tRNA molecule binds across the dimer.

It is found in the cytoplasm. The catalysed reaction is tRNA(Ser) + L-serine + ATP = L-seryl-tRNA(Ser) + AMP + diphosphate + H(+). The enzyme catalyses tRNA(Sec) + L-serine + ATP = L-seryl-tRNA(Sec) + AMP + diphosphate + H(+). The protein operates within aminoacyl-tRNA biosynthesis; selenocysteinyl-tRNA(Sec) biosynthesis; L-seryl-tRNA(Sec) from L-serine and tRNA(Sec): step 1/1. Functionally, catalyzes the attachment of serine to tRNA(Ser). Is also able to aminoacylate tRNA(Sec) with serine, to form the misacylated tRNA L-seryl-tRNA(Sec), which will be further converted into selenocysteinyl-tRNA(Sec). The protein is Serine--tRNA ligase of Mycobacterium leprae (strain TN).